The chain runs to 101 residues: Small ribosomal subunit protein uS14 (101 aa).

This sequence belongs to the universal ribosomal protein uS14 family. As to quaternary structure, part of the 30S ribosomal subunit. Contacts proteins S3 and S10.

Binds 16S rRNA, required for the assembly of 30S particles and may also be responsible for determining the conformation of the 16S rRNA at the A site. This is Small ribosomal subunit protein uS14 from Wigglesworthia glossinidia brevipalpis.